A 121-amino-acid chain; its full sequence is Large ribosomal subunit protein bL12 (121 aa).

The protein belongs to the bacterial ribosomal protein bL12 family. Homodimer. Part of the ribosomal stalk of the 50S ribosomal subunit. Forms a multimeric L10(L12)X complex, where L10 forms an elongated spine to which 2 to 4 L12 dimers bind in a sequential fashion. Binds GTP-bound translation factors.

Its function is as follows. Forms part of the ribosomal stalk which helps the ribosome interact with GTP-bound translation factors. Is thus essential for accurate translation. This Lactobacillus delbrueckii subsp. bulgaricus (strain ATCC BAA-365 / Lb-18) protein is Large ribosomal subunit protein bL12.